A 169-amino-acid polypeptide reads, in one-letter code: Protein-export protein SecB (169 aa).

It belongs to the SecB family. In terms of assembly, homotetramer, a dimer of dimers. One homotetramer interacts with 1 SecA dimer.

The protein localises to the cytoplasm. In terms of biological role, one of the proteins required for the normal export of preproteins out of the cell cytoplasm. It is a molecular chaperone that binds to a subset of precursor proteins, maintaining them in a translocation-competent state. It also specifically binds to its receptor SecA. This is Protein-export protein SecB from Pseudoalteromonas atlantica (strain T6c / ATCC BAA-1087).